A 163-amino-acid chain; its full sequence is Neurotrophin-3 (163 aa).

The signal sequence occupies residues 1 to 3 (IQS). A propeptide spanning residues 4–119 (TSMDQGILTE…VLNRTSRRKR (116 aa)) is cleaved from the precursor. Positions 35-61 (KQTARTKDGTQTTVKKSEAEADATASQ) are disordered. Asn112 carries N-linked (GlcNAc...) asparagine glycosylation.

Belongs to the NGF-beta family.

It localises to the secreted. Its function is as follows. Seems to promote the survival of visceral and proprioceptive sensory neurons. The protein is Neurotrophin-3 (NTF3) of Corallus caninus (Emerald tree boa).